The sequence spans 1070 residues: MLRDGNEGMSTIPGFSQIQFEGFCRFIDQGLTEELHKFPKIEDTDQEIEFQLFVETYQLVEPLIKERDAVYESLTYSSELYVPAGLIWKTGRDMQEQTVFIGNIPLMNSLGTSIVNGIYRIVINQILQSPGIYYRSELDHNGISVYTGTIISDWGGRSELEIDRKARIWARVSRKQKISILVLSSAMGSNLREILDNVCYPEIFLSFPNDKEKKKIGSRENAILEFYQQFACVGGDPVFSESLCKELQKKFFQQRCELGRIGRRNMNRRLNLDIPQNNTFLLPRDVLAAADHLIGMKFGMGTLDDMNHLKNKRIRSVADLLQDQFGLALVRLENAVRGTICGAIRHKLIPTPQNLVTSTPLTTTYESFFGLHPLSQVLDRTNPLTQIVHGRKSSYLGPGGLTGRTASFRIRDIHPSHYGRICPIDTSEGINVGLIGSLAIHARIGHWGSIESPFYEISERSKEVQMVYLSPSRDEYYMVAAGNSLALNWGIQEEQVVPARYRQEFLTIAWEQIHLRSIFPFQYFSIGASLIPFIEHNDANRALMSSNMQRQAVPLSRSEKCIVGTGLECQAALDSGVSAIAEHEGKIVYTDTDKIVLSGNGDTISIPLVMYQRSNKNTCMHQKPQVRRGKCIKKGQILADGAATVGGELALGKNVLVAYMPWEGYNSEDAVLISERLVYGDIYTSFHIRKYEIQTHVTSQGPERITNEIPHLEAHLLRNLDKNGIVMLGSWIETGDILVGKLTPQTAKESSYAPEDRLLRAILGIQVSTAKETCLKLPIGGRGRVIDVRWIQKKGGSSYNPEMIRVYISQKREIKVGDKVAGRHGNKGIISKILPRQDMPYLQDGTPVDMVFNPLGVPSRMNVGQIFECSLGLAGDLLDRHYRIAPFDERYEQEASRKLVFSELYSASKQTANPWVFEPECPGKSRIFDGRTGDPFEQPVIIGKSYILKLIHQVDDKIHGRSSGHYALVTQQPLRGRAKQGGQRVGEMEVWALEGFGVAHISQEMLTYKSDHIRARQEVLGTTIIGGTIPNPEDAPESFRLLVRELRSLALELNHFLVSEKNFQINRKEA.

It belongs to the RNA polymerase beta chain family. As to quaternary structure, in plastids the minimal PEP RNA polymerase catalytic core is composed of four subunits: alpha, beta, beta', and beta''. When a (nuclear-encoded) sigma factor is associated with the core the holoenzyme is formed, which can initiate transcription.

The protein resides in the plastid. Its subcellular location is the chloroplast. The catalysed reaction is RNA(n) + a ribonucleoside 5'-triphosphate = RNA(n+1) + diphosphate. Functionally, DNA-dependent RNA polymerase catalyzes the transcription of DNA into RNA using the four ribonucleoside triphosphates as substrates. This chain is DNA-directed RNA polymerase subunit beta, found in Liriodendron tulipifera (Tuliptree).